The sequence spans 344 residues: UDP-3-O-acylglucosamine N-acyltransferase (344 aa).

Catalysis depends on H236, which acts as the Proton acceptor.

This sequence belongs to the transferase hexapeptide repeat family. LpxD subfamily. Homotrimer.

The catalysed reaction is a UDP-3-O-[(3R)-3-hydroxyacyl]-alpha-D-glucosamine + a (3R)-hydroxyacyl-[ACP] = a UDP-2-N,3-O-bis[(3R)-3-hydroxyacyl]-alpha-D-glucosamine + holo-[ACP] + H(+). The protein operates within bacterial outer membrane biogenesis; LPS lipid A biosynthesis. In terms of biological role, catalyzes the N-acylation of UDP-3-O-acylglucosamine using 3-hydroxyacyl-ACP as the acyl donor. Is involved in the biosynthesis of lipid A, a phosphorylated glycolipid that anchors the lipopolysaccharide to the outer membrane of the cell. This Nitratidesulfovibrio vulgaris (strain ATCC 29579 / DSM 644 / CCUG 34227 / NCIMB 8303 / VKM B-1760 / Hildenborough) (Desulfovibrio vulgaris) protein is UDP-3-O-acylglucosamine N-acyltransferase.